Reading from the N-terminus, the 157-residue chain is Iron-sulfur cluster repair protein DnrN (157 aa).

Belongs to the RIC family.

The protein localises to the cytoplasm. Its function is as follows. Di-iron-containing protein involved in the repair of iron-sulfur clusters damaged by oxidative and nitrosative stress conditions. Required to repair damage caused by nitric oxide to FNR and NsrR transcription factors. This Neisseria gonorrhoeae protein is Iron-sulfur cluster repair protein DnrN (dnrN).